Reading from the N-terminus, the 618-residue chain is Keratin, type I cytoskeletal 9 (618 aa).

Positions 1–49 (MSFRQISSSFRSSSGSSCGGGGGRGASRGSMRSSFGRSSRAGGESRFGS) are disordered. The interval 1-137 (MSFRQISSSF…GGEGSILNTN (137 aa)) is head. Residues 7 to 16 (SSSFRSSSGS) are compositionally biased toward low complexity. Phosphoserine occurs at positions 14 and 17. The segment covering 17–26 (SCGGGGGRGA) has biased composition (gly residues). Low complexity predominate over residues 27–49 (SRGSMRSSFGRSSRAGGESRFGS). The segment at 138-173 (EKVVMQNLNSRLASYMDKVQELEEDNANLEKQIQEW) is coil 1A. In terms of domain architecture, IF rod spans 138–450 (EKVVMQNLNS…KLLEGGQQDF (313 aa)). Residues 174–192 (YSRKGNRVFQKDYSHYYNT) are linker 1. The interval 193 to 284 (IEDLKDRIVD…KSHKEEMNQL (92 aa)) is coil 1B. Residues 285 to 307 (TGLNDGDVNVEINVAPSTDLTQV) are linker 12. Residues 308 to 446 (LNDMREEYEH…ETYRKLLEGG (139 aa)) form a coil 2 region. Residues 447–609 (QQDFESSGAG…GGGNTRPSQS (163 aa)) form a tail region. Residues 449–618 (DFESSGAGQI…SQSSQIPRLR (170 aa)) form a disordered region. The segment covering 456–603 (GQIGFGSGKG…GSGGSYGGGN (148 aa)) has biased composition (gly residues). The segment covering 607–618 (SQSQSSQIPRLR) has biased composition (low complexity).

This sequence belongs to the intermediate filament family. Heterotetramer of two type I and two type II keratins. As to expression, expressed in the perinuclear ring of spermatid manchettes within testis and in keratinocytes of the suprabasal layer of footpad epidermis (at protein level).

In terms of biological role, may serve an important special function either in the mature palmar and plantar skin tissue or in the morphogenetic program of the formation of these tissues. Plays a role in keratin filament assembly. May be involved in spermatid nuclear shaping and sperm development. The chain is Keratin, type I cytoskeletal 9 (Krt9) from Rattus norvegicus (Rat).